We begin with the raw amino-acid sequence, 382 residues long: MTNRKSLAMVIPMLLAASNGVNALEVFHKHGNKLELYGSINPNHKLNHSFLANKITSHKDDTNAILGLSGEVNIADELFSYATIEYGIDLSVPEQLLDKQQPNNLRLGYAGFKYGNWGSIDYGRNYGVLHDVQALTNRSPYINKDSIFSYNDNYMTGRSNSLLTYKNDDIFGLIDGMSFILQYQDQSENRAQNQTNGPGWGISIKYETDVGLTAIGSCFSSQRFQSDKSNQDNKLTPSVGAYGLGFKYDANDIYIAAFYGEGRNLTPSLNILSDNNASKDQPYINKTQNIEAIAEYNFHSGFHPSLSYLDSKGQNLNIKDATTVPKNLELAKQINISTRYEFNKNISTYMNYTINLLKSDNVIKEQNIPTDNTIGAGIVYHF.

Positions 1 to 23 (MTNRKSLAMVIPMLLAASNGVNA) are cleaved as a signal peptide.

This sequence belongs to the Gram-negative porin family. As to quaternary structure, homotrimer.

It localises to the cell outer membrane. Functionally, forms pores that allow passive diffusion of small molecules across the membrane. The protein is Porin-like protein BU359 of Buchnera aphidicola subsp. Acyrthosiphon pisum (strain APS) (Acyrthosiphon pisum symbiotic bacterium).